Here is a 469-residue protein sequence, read N- to C-terminus: UDP-N-acetylmuramoylalanine--D-glutamate ligase (469 aa).

Glycine 125–threonine 131 is an ATP binding site.

Belongs to the MurCDEF family.

It is found in the cytoplasm. The enzyme catalyses UDP-N-acetyl-alpha-D-muramoyl-L-alanine + D-glutamate + ATP = UDP-N-acetyl-alpha-D-muramoyl-L-alanyl-D-glutamate + ADP + phosphate + H(+). It participates in cell wall biogenesis; peptidoglycan biosynthesis. Functionally, cell wall formation. Catalyzes the addition of glutamate to the nucleotide precursor UDP-N-acetylmuramoyl-L-alanine (UMA). This is UDP-N-acetylmuramoylalanine--D-glutamate ligase from Prochlorococcus marinus (strain NATL2A).